A 444-amino-acid polypeptide reads, in one-letter code: Multidrug resistance protein MdtA (444 aa).

The signal sequence occupies residues 1-20 (MKSQSKRTSRLFVFVGVVVA). The span at 37-52 (NNTSGAQQSARGQDTS) shows a compositional bias: polar residues. Disordered stretches follow at residues 37-60 (NNTS…RNTP) and 399-444 (PRSA…AEKS). The span at 409–419 (ASAEKAAAEAE) shows a compositional bias: low complexity. The span at 435-444 (ARSTTAAEKS) shows a compositional bias: polar residues.

It belongs to the membrane fusion protein (MFP) (TC 8.A.1) family. Part of a tripartite efflux system composed of MdtA, MdtB and MdtC.

It is found in the cell inner membrane. The polypeptide is Multidrug resistance protein MdtA (Yersinia pseudotuberculosis serotype I (strain IP32953)).